The following is a 178-amino-acid chain: Large ribosomal subunit protein uL6 (178 aa).

The protein belongs to the universal ribosomal protein uL6 family. In terms of assembly, part of the 50S ribosomal subunit.

Its function is as follows. This protein binds to the 23S rRNA, and is important in its secondary structure. It is located near the subunit interface in the base of the L7/L12 stalk, and near the tRNA binding site of the peptidyltransferase center. The protein is Large ribosomal subunit protein uL6 of Halalkalibacterium halodurans (strain ATCC BAA-125 / DSM 18197 / FERM 7344 / JCM 9153 / C-125) (Bacillus halodurans).